Here is a 508-residue protein sequence, read N- to C-terminus: Ribonuclease Y (508 aa).

The chain crosses the membrane as a helical span at residues 1–21; the sequence is MMLWYIVAGAGGLLIGYLIAN. The KH domain occupies 198–283; it reads TVSTVSLPSD…EMYEKAKQEV (86 aa). One can recognise an HD domain in the interval 324–417; the sequence is VLNHSIEVAL…VAAADALSAA (94 aa).

The protein belongs to the RNase Y family.

It is found in the cell membrane. Functionally, endoribonuclease that initiates mRNA decay. This Thermotoga maritima (strain ATCC 43589 / DSM 3109 / JCM 10099 / NBRC 100826 / MSB8) protein is Ribonuclease Y.